Here is a 216-residue protein sequence, read N- to C-terminus: Probable calcium-binding protein CML35 (216 aa).

Residues Thr18–Ser58 form a disordered region. The span at Ser23 to Ser44 shows a compositional bias: low complexity. 4 consecutive EF-hand domains span residues Asp66–Glu101, Pro103–Glu138, Val141–Glu176, and Cys178–Asp213. Residues Asp79, Asp81, Asp83, and Asp90 each contribute to the Ca(2+) site. Residues Asp154, Asp156, Asn158, Lys160, Glu165, Asp191, Asn193, Asp195, and Asp202 each contribute to the Ca(2+) site.

Functionally, potential calcium sensor. The sequence is that of Probable calcium-binding protein CML35 (CML35) from Arabidopsis thaliana (Mouse-ear cress).